A 111-amino-acid chain; its full sequence is Carboxysome shell protein CcmK1 (111 aa).

Residues 4-90 (AVGMIETLGF…PHENLEYVLP (87 aa)) enclose the BMC domain.

The protein belongs to the bacterial microcompartments protein family. CcmK subfamily. In terms of assembly, homohexamer. Interacts with full-length CcmM. Forms mixed heterohexamers of all possible stoichiometries with CcmK2, which might form dodecamers. Only very weak interactions with CcmK3 and CcmK4 were seen. Interacts with CcmN and CcmO in the carboxysome.

Its subcellular location is the carboxysome. In terms of biological role, one of the shell proteins of the carboxysome, a polyhedral inclusion where RuBisCO (ribulose bisphosphate carboxylase, rbcL-rbcS) is sequestered. Assembles into hexamers which make sheets that form the facets of the polyhedral carboxysome. The hexamer central pore probably regulates metabolite flux. Probably the major shell protein of the carboxysome, a polyhedral inclusion where RuBisCO (ribulose bisphosphate carboxylase, rbcL-rbcS) is sequestered. The central pore probably regulates metabolite flux. Hexamers make sheets that form the facets of the carboxysome. This Synechocystis sp. (strain ATCC 27184 / PCC 6803 / Kazusa) protein is Carboxysome shell protein CcmK1.